Here is a 334-residue protein sequence, read N- to C-terminus: Phenazine-1-carboxylate N-methyltransferase (334 aa).

2 residues coordinate S-adenosyl-L-methionine: D198 and R241.

It belongs to the class I-like SAM-binding methyltransferase superfamily. Cation-independent O-methyltransferase family. In terms of assembly, homodimer in solution. Probably interacts transiently with PhzS.

The catalysed reaction is phenazine-1-carboxylate + S-adenosyl-L-methionine = 5-methyl-phenazine-1-carboxylate + S-adenosyl-L-homocysteine. Its pathway is secondary metabolite biosynthesis; pyocyanine biosynthesis. In vitro, requires PhzS for activity. In terms of biological role, involved in the biosynthesis of pyocyanine, a blue-pigmented phenazine derivative, which plays a role in virulence. Converts phenazine-1-carboxylate (PCA) to 5-methylphenazine-1-carboxylate (5-methyl-PCA). The sequence is that of Phenazine-1-carboxylate N-methyltransferase from Pseudomonas aeruginosa (strain ATCC 15692 / DSM 22644 / CIP 104116 / JCM 14847 / LMG 12228 / 1C / PRS 101 / PAO1).